We begin with the raw amino-acid sequence, 746 residues long: EF-hand domain-containing family member C2 (746 aa).

DM10 domains follow at residues 75 to 182 (DKQV…RKMG), 226 to 367 (DGHV…RTKY), and 429 to 536 (ESNT…EKHA). The EF-hand domain occupies 557–592 (PRSREIRQVFAAADPQHTKVIEYDPFRNLIVSITDG).

Its subcellular location is the cytoplasm. It localises to the cytoskeleton. The protein localises to the cilium axoneme. In terms of biological role, microtubule inner protein (MIP) part of the dynein-decorated doublet microtubules (DMTs) in cilia axoneme, which is required for motile cilia beating. This chain is EF-hand domain-containing family member C2 (EFHC2), found in Gallus gallus (Chicken).